The chain runs to 367 residues: Glutamate 5-kinase (367 aa).

ATP is bound at residue K17. Residues S57, D144, and N156 each coordinate substrate. Residues 176 to 177 and 217 to 223 contribute to the ATP site; these read SD and TGGMTSK. One can recognise a PUA domain in the interval 279 to 357; that stretch reads AGALTLDEGA…SELPGELRRP (79 aa).

Belongs to the glutamate 5-kinase family.

Its subcellular location is the cytoplasm. It carries out the reaction L-glutamate + ATP = L-glutamyl 5-phosphate + ADP. Its pathway is amino-acid biosynthesis; L-proline biosynthesis; L-glutamate 5-semialdehyde from L-glutamate: step 1/2. Functionally, catalyzes the transfer of a phosphate group to glutamate to form L-glutamate 5-phosphate. The chain is Glutamate 5-kinase from Mycolicibacterium paratuberculosis (strain ATCC BAA-968 / K-10) (Mycobacterium paratuberculosis).